A 356-amino-acid polypeptide reads, in one-letter code: sn-glycerol-3-phosphate import ATP-binding protein UgpC (356 aa).

An ABC transporter domain is found at 4-235; the sequence is LKLQAVTKSW…PASLFVASFI (232 aa). 37-44 is a binding site for ATP; sequence GPSGCGKS.

The protein belongs to the ABC transporter superfamily. sn-glycerol-3-phosphate importer (TC 3.A.1.1.3) family. As to quaternary structure, the complex is composed of two ATP-binding proteins (UgpC), two transmembrane proteins (UgpA and UgpE) and a solute-binding protein (UgpB).

Its subcellular location is the cell inner membrane. It catalyses the reaction sn-glycerol 3-phosphate(out) + ATP + H2O = sn-glycerol 3-phosphate(in) + ADP + phosphate + H(+). In terms of biological role, part of the ABC transporter complex UgpBAEC involved in sn-glycerol-3-phosphate (G3P) import. Responsible for energy coupling to the transport system. This is sn-glycerol-3-phosphate import ATP-binding protein UgpC from Escherichia coli O6:K15:H31 (strain 536 / UPEC).